The primary structure comprises 69 residues: Large ribosomal subunit protein bL31 (69 aa).

The protein belongs to the bacterial ribosomal protein bL31 family. Type A subfamily. Part of the 50S ribosomal subunit.

Binds the 23S rRNA. This Magnetococcus marinus (strain ATCC BAA-1437 / JCM 17883 / MC-1) protein is Large ribosomal subunit protein bL31.